Reading from the N-terminus, the 635-residue chain is Biosynthetic arginine decarboxylase (635 aa).

Lysine 100 is modified (N6-(pyridoxal phosphate)lysine). 282–292 (VDIGGGLGVDY) provides a ligand contact to substrate.

This sequence belongs to the Orn/Lys/Arg decarboxylase class-II family. SpeA subfamily. Mg(2+) serves as cofactor. The cofactor is pyridoxal 5'-phosphate.

The enzyme catalyses L-arginine + H(+) = agmatine + CO2. It functions in the pathway amine and polyamine biosynthesis; agmatine biosynthesis; agmatine from L-arginine: step 1/1. Its function is as follows. Catalyzes the biosynthesis of agmatine from arginine. The polypeptide is Biosynthetic arginine decarboxylase (Geobacter metallireducens (strain ATCC 53774 / DSM 7210 / GS-15)).